We begin with the raw amino-acid sequence, 1017 residues long: Voltage-gated delayed rectifier potassium channel KCNH4 (1017 aa).

Over Met-1–Ile-228 the chain is Cytoplasmic. In terms of domain architecture, PAS spans Phe-14 to His-90. The PAC domain occupies His-93–Gly-145. The tract at residues Ser-138 to Gly-157 is disordered. Residues Pro-139–Gly-148 show a composition bias toward gly residues. The chain crosses the membrane as a helical span at residues Trp-229–Cys-249. The Extracellular segment spans residues Phe-250–Thr-259. A helical membrane pass occupies residues Ser-260–Leu-280. At Asn-281 to Leu-302 the chain is on the cytoplasmic side. The helical transmembrane segment at His-303–Tyr-323 threads the bilayer. Topologically, residues Ile-324–Leu-332 are extracellular. Asn-326 carries an N-linked (GlcNAc...) asparagine glycan. Residues Val-333 to Arg-353 form a helical; Voltage-sensor membrane-spanning segment. The Cytoplasmic segment spans residues Tyr-354–Val-361. The helical transmembrane segment at Leu-362–Val-382 threads the bilayer. Over Ile-383 to Ile-427 the chain is Extracellular. Asn-414 carries an N-linked (GlcNAc...) asparagine glycan. An intramembrane region (pore-forming) is located at residues Ala-428–Asn-448. Residues Ser-439–Asn-444 carry the Selectivity filter motif. Topologically, residues Thr-449 to Tyr-482 are extracellular. A glycan (N-linked (GlcNAc...) asparagine) is linked at Asn-473. Residues Ser-483–Arg-503 form a helical membrane-spanning segment. At Leu-504–His-1017 the chain is on the cytoplasmic side. The interval Leu-556–Gly-620 is cNMP-binding domain. A compositionally biased stretch (polar residues) spans Gly-691–Ser-724. Disordered stretches follow at residues Gly-691–Leu-749, Leu-772–Ala-803, Pro-821–Glu-875, and Leu-971–His-1017. The segment covering Leu-772–Ala-787 has biased composition (low complexity). Over residues Ile-978–Pro-1002 the composition is skewed to pro residues. Over residues Ser-1008–His-1017 the composition is skewed to polar residues.

It belongs to the potassium channel family. H (Eag) (TC 1.A.1.20) subfamily. Kv12.3/KCNH4 sub-subfamily. The potassium channel is probably composed of a homo- or heterotetrameric complex of pore-forming alpha subunits that can associate with modulating beta subunits. Detected only in brain, in particular in the telencephalon. Detected in putamen and caudate nucleus, and at lower levels in cerebral cortex, occipital and hippocampus.

It is found in the membrane. It catalyses the reaction K(+)(in) = K(+)(out). Functionally, pore-forming (alpha) subunit of a voltage-gated delayed rectifier. Activates at more negative voltages, exhibits fast prepulse-independent activation kinetics and deactivates much more slowly, but shows no inactivation. This is Voltage-gated delayed rectifier potassium channel KCNH4 from Homo sapiens (Human).